The primary structure comprises 104 residues: Probable head completion protein 1 (104 aa).

This sequence belongs to the skunalikevirus head completion protein 1 family.

It localises to the virion. Probable head completion protein that exhibits an open central channel for viral DNA ejection. Part of the head-tail connector by binding to the portal protein and to the head completion protein 2. Plays a role in morphogenesis of the virion capsid after genome packaging. This is Probable head completion protein 1 from Lactococcus lactis (Lactococcus lactis bacteriophage p2).